The primary structure comprises 62 residues: UPF0434 protein Smed_3047 (62 aa).

The protein belongs to the UPF0434 family.

The sequence is that of UPF0434 protein Smed_3047 from Sinorhizobium medicae (strain WSM419) (Ensifer medicae).